A 296-amino-acid polypeptide reads, in one-letter code: MAAVSSVASLRGADYENGLRGVAGPSDGGQDPGEDDPMGRGTLDLEMELLEQGRRSRRVGGRTTPGRRSGGRGGSGGGGAGGLEELEDEELEEEEPGELTGDQTIEDPELEAIKARVREMEEEAEKLKELQNEVEKQMNMSPPPGNAGPVIMSVEEKMEADARSIYVGNVDYGATAEELEAHFHGCGSVNRVTILCDKFTGHPKGFAYIEFCDKESVRTSLALDESLFRGRQIKVVPKRTNRPGISTTDRGFPRARYRARASSYSSRSRFYSGYTPRPRGRVYRGRARATSWYTPY.

Residues 1–106 are disordered; sequence MAAVSSVASL…GELTGDQTIE (106 aa). Over residues 71–82 the composition is skewed to gly residues; sequence GRGGSGGGGAGG. Residues 84-97 are compositionally biased toward acidic residues; the sequence is EELEDEELEEEEPG. Residues 107-141 adopt a coiled-coil conformation; that stretch reads DPELEAIKARVREMEEEAEKLKELQNEVEKQMNMS. A necessary for homooligomerization region spans residues 146–296; sequence NAGPVIMSVE…ARATSWYTPY (151 aa). Residues 163–240 form the RRM domain; that stretch reads RSIYVGNVDY…RQIKVVPKRT (78 aa).

In terms of assembly, monomer and homooligomer. Binds RNA as a monomer and oligomerizes when bound to poly(A). In terms of tissue distribution, shows dynamic spatial expression throughout development. First expressed in the animal pole region of the egg and this pattern persists through to the blastula stage. In gastrula and neurula embryos, expressed mainly in ectodermal, neural and epidermal regions. Neural tissue-specific expression pattern persists into tailbud stage when expression is localized to the brain and spinal cord. At early tadpole stage, expression becomes gradually confined to the specific vesicle regions of the developing brain. At stage 39, expressed in the telencephalon and mesencephalon regions of the brain. Also detected in the eye and olfactory pit at the tadpole stage. Expressed during gut endoderm development. At stage 35, expressed exclusively in the anterior portion of the gut endoderm, which includes the prospective liver, stomach and pancreas. As development proceeds, expression becomes restricted to the pancreas, and by stage 46/47 (the seventh day of development) expression is localized exclusively to the pancreas. Expressed in most adult tissues.

Its subcellular location is the nucleus. The protein resides in the cytoplasm. Involved in the 3'-end formation of mRNA precursors (pre-mRNA) by the addition of a poly(A) tail of 200-250 nt to the upstream cleavage product. Stimulates poly(A) polymerase (PAPOLA) conferring processivity on the poly(A) tail elongation reaction and also controls the poly(A) tail length. Increases the affinity of poly(A) polymerase for RNA. Binds to poly(A) and to poly(G) with high affinity. May protect the poly(A) tail from degradation. The chain is Polyadenylate-binding protein 2-A (pabpn1-a) from Xenopus laevis (African clawed frog).